We begin with the raw amino-acid sequence, 314 residues long: Olfactory receptor 5P67 (314 aa).

Residues 1 to 28 are Extracellular-facing; the sequence is MAFLEDGNHTAVTEFILLGLTDDPVLRV. N-linked (GlcNAc...) asparagine glycosylation occurs at asparagine 8. The chain crosses the membrane as a helical span at residues 29–49; that stretch reads ILFTIILCIYLVTVSGNLSTI. Residues 50–57 lie on the Cytoplasmic side of the membrane; the sequence is LLIRVSSQ. The helical transmembrane segment at 58–78 threads the bilayer; sequence LHHPMYFFLSHVGSVDIGYSS. Over 79 to 102 the chain is Extracellular; it reads SVTPNMLVNFLVEKHTIAYLGCGI. A disulfide bridge links cysteine 100 with cysteine 192. Residues 103 to 123 traverse the membrane as a helical segment; that stretch reads QLSSAAFFGTAECFLLATMAY. Residues 124-136 lie on the Cytoplasmic side of the membrane; sequence DRFVAICNPLLYS. The helical transmembrane segment at 137-157 threads the bilayer; it reads TKMSTQTCIQLVVGSYTGGIL. Residues 158 to 199 are Extracellular-facing; the sequence is NASFAIISFFSFLFCGPNRINHFYCDFAPLVELSCSDINVSV. Residues 200–220 traverse the membrane as a helical segment; that stretch reads VITTIFSASVTIITVFVIAIS. At 221-240 the chain is on the cytoplasmic side; that stretch reads YTYILITILKMRSTEGRHKA. The chain crosses the membrane as a helical span at residues 241–261; the sequence is FSTCTSYLTAVTLFYGTVTFI. Topologically, residues 262–274 are extracellular; that stretch reads YVVPKSNYSTDQN. The N-linked (GlcNAc...) asparagine glycan is linked to asparagine 268. The chain crosses the membrane as a helical span at residues 275–295; that stretch reads KVASVFYIVVIPMLNPLIYSL. Topologically, residues 296–314 are cytoplasmic; sequence RNNDIKGALKRQLGKKTFS.

The protein belongs to the G-protein coupled receptor 1 family.

It is found in the cell membrane. In terms of biological role, potential odorant receptor. This chain is Olfactory receptor 5P67, found in Mus musculus (Mouse).